Reading from the N-terminus, the 403-residue chain is Phosphoglycerate kinase (403 aa).

Substrate-binding positions include 21 to 23, Arg36, 59 to 62, Arg119, and Arg159; these read DFN and HLGR. ATP is bound by residues Lys214, Gly301, Glu332, and 359 to 362; that span reads GGDS.

This sequence belongs to the phosphoglycerate kinase family. Monomer.

Its subcellular location is the cytoplasm. The catalysed reaction is (2R)-3-phosphoglycerate + ATP = (2R)-3-phospho-glyceroyl phosphate + ADP. Its pathway is carbohydrate degradation; glycolysis; pyruvate from D-glyceraldehyde 3-phosphate: step 2/5. In Lactobacillus delbrueckii subsp. bulgaricus (strain ATCC 11842 / DSM 20081 / BCRC 10696 / JCM 1002 / NBRC 13953 / NCIMB 11778 / NCTC 12712 / WDCM 00102 / Lb 14), this protein is Phosphoglycerate kinase.